The sequence spans 465 residues: Chromosomal replication initiator protein DnaA (465 aa).

The interval 1-87 (MLWTDCLTRL…RPGSILSSSE (87 aa)) is domain I, interacts with DnaA modulators. The tract at residues 81 to 123 (SILSSSEQPATTTAALQTAPIPQPAKVKREPEPVANTAVSSKS) is disordered. The segment covering 88–100 (QPATTTAALQTAP) has biased composition (low complexity). The domain II stretch occupies residues 88 to 127 (QPATTTAALQTAPIPQPAKVKREPEPVANTAVSSKSSKKK). The segment at 128–345 (LLNPQFTFSL…GALNKVVAIS (218 aa)) is domain III, AAA+ region. The ATP site is built by glycine 173, glycine 175, lysine 176, and threonine 177. A domain IV, binds dsDNA region spans residues 346–465 (RFKGAPIDLD…YKNLLRLLQS (120 aa)).

Belongs to the DnaA family. Oligomerizes as a right-handed, spiral filament on DNA at oriC.

It localises to the cytoplasm. Its function is as follows. Plays an essential role in the initiation and regulation of chromosomal replication. ATP-DnaA binds to the origin of replication (oriC) to initiate formation of the DNA replication initiation complex once per cell cycle. Binds the DnaA box (a 9 base pair repeat at the origin) and separates the double-stranded (ds)DNA. Forms a right-handed helical filament on oriC DNA; dsDNA binds to the exterior of the filament while single-stranded (ss)DNA is stabiized in the filament's interior. The ATP-DnaA-oriC complex binds and stabilizes one strand of the AT-rich DNA unwinding element (DUE), permitting loading of DNA polymerase. After initiation quickly degrades to an ADP-DnaA complex that is not apt for DNA replication. Binds acidic phospholipids. In Acinetobacter baumannii (strain ATCC 17978 / DSM 105126 / CIP 53.77 / LMG 1025 / NCDC KC755 / 5377), this protein is Chromosomal replication initiator protein DnaA.